Consider the following 238-residue polypeptide: Outer membrane protein A (238 aa).

A run of 5 beta stranded transmembrane segments spans residues 1 to 8 (LTAKLGYP), 13 to 21 (LDIYTRLGG), 43 to 52 (PVFAGGVEYA), 57 to 64 (IATRLEYQ), and 83 to 91 (LLSVGVSYR). A run of 3 repeats spans residues 104–105 (AP), 106–107 (AP), and 108–109 (AP). A 3 X 2 AA tandem repeats of A-P region spans residues 104–109 (APAPAP). Positions 111-238 (VQTKHFTLKS…RRVEIEVKGI (128 aa)) constitute an OmpA-like domain. A disulfide bridge connects residues C212 and C224.

It belongs to the outer membrane OOP (TC 1.B.6) superfamily. OmpA family. Monomer and homodimer.

Its subcellular location is the cell outer membrane. Functionally, with TolR probably plays a role in maintaining the position of the peptidoglycan cell wall in the periplasm. Acts as a porin with low permeability that allows slow penetration of small solutes; an internal gate slows down solute passage. The chain is Outer membrane protein A from Citrobacter freundii.